A 104-amino-acid chain; its full sequence is Replication restart protein PriB (104 aa).

The SSB domain maps to 1-101 (MTNRLVLSGT…LHAEQIELID (101 aa)).

This sequence belongs to the PriB family. As to quaternary structure, homodimer. Interacts with PriA and DnaT. Component of the replication restart primosome. Primosome assembly occurs via a 'hand-off' mechanism. PriA binds to replication forks, subsequently PriB then DnaT bind; DnaT then displaces ssDNA to generate the helicase loading substrate.

Involved in the restart of stalled replication forks, which reloads the replicative helicase on sites other than the origin of replication; the PriA-PriB pathway is the major replication restart pathway. During primosome assembly it facilitates complex formation between PriA and DnaT on DNA; stabilizes PriA on DNA. Stimulates the DNA unwinding activity of PriA helicase. This is Replication restart protein PriB from Shigella dysenteriae serotype 1 (strain Sd197).